Reading from the N-terminus, the 281-residue chain is Phosphonates import ATP-binding protein PhnC (281 aa).

One can recognise an ABC transporter domain in the interval 5 to 253 (IEVCGLTKSF…MLRDLYGTEA (249 aa)). Residue 38-45 (GASGSGKS) coordinates ATP.

Belongs to the ABC transporter superfamily. Phosphonates importer (TC 3.A.1.9.1) family. The complex is composed of two ATP-binding proteins (PhnC), two transmembrane proteins (PhnE) and a solute-binding protein (PhnD).

Its subcellular location is the cell inner membrane. The catalysed reaction is phosphonate(out) + ATP + H2O = phosphonate(in) + ADP + phosphate + H(+). Its function is as follows. Part of the ABC transporter complex PhnCDE involved in phosphonates import. Responsible for energy coupling to the transport system. This is Phosphonates import ATP-binding protein PhnC from Cupriavidus pinatubonensis (strain JMP 134 / LMG 1197) (Cupriavidus necator (strain JMP 134)).